The following is a 988-amino-acid chain: Squamosa promoter-binding-like protein 16 (988 aa).

The disordered stretch occupies residues 52–79; it reads GTPVDLTRPSKKVRSGSPGSGGGGGGNY. Over residues 69-78 the composition is skewed to gly residues; the sequence is PGSGGGGGGN. Residues 79–156 form an SBP-type zinc finger; that stretch reads YPKCQVDNCK…DGHNRRRRKT (78 aa). Zn(2+)-binding residues include cysteine 82, cysteine 87, cysteine 104, histidine 107, cysteine 123, cysteine 126, histidine 130, and cysteine 142. The Bipartite nuclear localization signal signature appears at 139–155; sequence KRSCRRRLDGHNRRRRK. 2 disordered regions span residues 240–262 and 289–416; these read RKNP…SSPS and GFGN…DTST. Polar residues-rich tracts occupy residues 250-262, 301-311, and 327-358; these read NPQN…SSPS, LTSSDHSATTS, and RTSS…FTSS. The span at 368-379 shows a compositional bias: low complexity; sequence ASSTKYYSSASS.

Zn(2+) is required as a cofactor.

It localises to the nucleus. Trans-acting factor that binds specifically to the consensus nucleotide sequence 5'-TNCGTACAA-3'. The protein is Squamosa promoter-binding-like protein 16 (SPL16) of Arabidopsis thaliana (Mouse-ear cress).